Consider the following 361-residue polypeptide: Protein YIM1-2 (361 aa).

The protein belongs to the YIM1 family.

Its subcellular location is the lipid droplet. The protein localises to the mitochondrion. The sequence is that of Protein YIM1-2 (YIM1-2) from Lachancea thermotolerans (strain ATCC 56472 / CBS 6340 / NRRL Y-8284) (Yeast).